The following is a 585-amino-acid chain: Amyloid protein-binding protein 2 (585 aa).

TPR repeat units follow at residues Gln50–Phe83, Ile120–His153, Ala206–Gly239, Ser288–Val321, His333–Ile367, Ala429–Leu462, Ala471–Leu505, and Glu514–Arg547.

In terms of assembly, component of a CRL2 E3 ubiquitin-protein ligase complex, also named ECS (Elongin BC-CUL2/5-SOCS-box protein) complex, composed of CUL2, Elongin BC (ELOB and ELOC), RBX1 and substrate-specific adapter APPBP2. Interacts with APP; APP interaction inhibits the E3 ubiquitin-protein ligase activity of the CRL2(APPBP2) complex. Rapidly degraded by the proteasome upon overexpression of a C-terminal fragment of APP.

The protein localises to the nucleus. Its subcellular location is the cytoplasm. It localises to the cytoskeleton. The protein resides in the membrane. The protein operates within protein modification; protein ubiquitination. E3 ubiquitin-protein ligase activity of the CRL2(APPBP2) complex is inhibited by APP. In terms of biological role, substrate-recognition component of a Cul2-RING (CRL2) E3 ubiquitin-protein ligase complex of the DesCEND (destruction via C-end degrons) pathway, which recognizes a C-degron located at the extreme C terminus of target proteins, leading to their ubiquitination and degradation. The C-degron recognized by the DesCEND pathway is usually a motif of less than ten residues and can be present in full-length proteins, truncated proteins or proteolytically cleaved forms. The CRL2(APPBP2) complex specifically recognizes proteins with a -Arg-Xaa-Xaa-Gly degron at the C-terminus, leading to their ubiquitination and degradation. The CRL2(APPBP2) complex mediates ubiquitination and degradation of truncated SELENOV selenoproteins produced by failed UGA/Sec decoding, which end with a -Arg-Xaa-Xaa-Gly degron. May play a role in intracellular protein transport: may be involved in the translocation of APP along microtubules toward the cell surface. This chain is Amyloid protein-binding protein 2, found in Homo sapiens (Human).